Here is a 20-residue protein sequence, read N- to C-terminus: Short cationic peptide-4a (20 aa).

Glutamic acid 1-amide is present on Glu20.

As to expression, expressed by the venom gland.

The protein resides in the secreted. This chain is Short cationic peptide-4a, found in Cupiennius salei (American wandering spider).